A 302-amino-acid chain; its full sequence is D-alanine--D-alanine ligase (302 aa).

One can recognise an ATP-grasp domain in the interval 100–294 (KALFRREGLL…FPELVEKLIQ (195 aa)). An ATP-binding site is contributed by 127-180 (GLNYPIFVKSNIGGSSVNVHLVTNYEELFIAMEALFNAGEEVLLEEAIIGQEVT). Residues Asp-248, Glu-261, and Asn-263 each coordinate Mg(2+).

It belongs to the D-alanine--D-alanine ligase family. Mg(2+) is required as a cofactor. Requires Mn(2+) as cofactor.

Its subcellular location is the cytoplasm. The enzyme catalyses 2 D-alanine + ATP = D-alanyl-D-alanine + ADP + phosphate + H(+). It participates in cell wall biogenesis; peptidoglycan biosynthesis. In terms of biological role, cell wall formation. The chain is D-alanine--D-alanine ligase from Lawsonia intracellularis (strain PHE/MN1-00).